The primary structure comprises 208 residues: MSRYTGPVEKLERRLGVDLFMKGERRLAGKSALLKRPYAPGQHGQRRAKVSEYGSQLREKQKAKFMYGLSEKQFRRLFKEAARREGNTGEILVQLLEQRLDNLVYRMGFATTRRFARQLVTHGHILVDGKRVDIPSYSVKVGQKIEIAEKSKNNPQILRAVELTAQTGIVAWVDVEKDKKFGIFTRKPERDEIVIPIEERFIVELYSK.

Residues 98-161 form the S4 RNA-binding domain; the sequence is QRLDNLVYRM…KNNPQILRAV (64 aa).

It belongs to the universal ribosomal protein uS4 family. Part of the 30S ribosomal subunit. Contacts protein S5. The interaction surface between S4 and S5 is involved in control of translational fidelity.

In terms of biological role, one of the primary rRNA binding proteins, it binds directly to 16S rRNA where it nucleates assembly of the body of the 30S subunit. Functionally, with S5 and S12 plays an important role in translational accuracy. In Campylobacter hominis (strain ATCC BAA-381 / DSM 21671 / CCUG 45161 / LMG 19568 / NCTC 13146 / CH001A), this protein is Small ribosomal subunit protein uS4.